Reading from the N-terminus, the 431-residue chain is Protein prenyltransferase alpha subunit repeat-containing protein 1-B (431 aa).

PFTA repeat units lie at residues 85–118 (ELID…TLNP), 120–153 (KDLQ…VQEL), 178–211 (EEMH…GNLN), 217–250 (DELS…LCKT), and 293–326 (EEMK…HQLL). Positions 363–383 (PMDVDGMSDPNKQGYTQETKR) are disordered. The stretch at 394 to 431 (SLDSELRFINCVLTNCCSPEQSRFAASYRKWLLSLQGY) is one PFTA 6 repeat.

It belongs to the protein prenyltransferase subunit alpha family.

The chain is Protein prenyltransferase alpha subunit repeat-containing protein 1-B (ptar1-b) from Xenopus laevis (African clawed frog).